Here is a 458-residue protein sequence, read N- to C-terminus: Argininosuccinate lyase (458 aa).

This sequence belongs to the lyase 1 family. Argininosuccinate lyase subfamily.

It is found in the cytoplasm. It catalyses the reaction 2-(N(omega)-L-arginino)succinate = fumarate + L-arginine. It functions in the pathway amino-acid biosynthesis; L-arginine biosynthesis; L-arginine from L-ornithine and carbamoyl phosphate: step 3/3. The sequence is that of Argininosuccinate lyase from Anoxybacillus flavithermus (strain DSM 21510 / WK1).